A 219-amino-acid chain; its full sequence is Ras-related protein Rab-3 (219 aa).

GTP-binding positions include 29-37, 48-54, 77-81, 135-138, and 165-167; these read GNSSVGKTS, TSAFVST, DTAGQ, NKCD, and SAK. An Effector region motif is present at residues 51 to 59; it reads FVSTVGIDF. Residues 191–219 are disordered; it reads LDKDPQQQPKGQKLEANPTQKPAQQQCNC. Residues 207-219 are compositionally biased toward polar residues; that stretch reads NPTQKPAQQQCNC. Residues C217 and C219 are each lipidated (S-geranylgeranyl cysteine). C219 carries the post-translational modification Cysteine methyl ester.

This sequence belongs to the small GTPase superfamily. Rab family.

The protein localises to the cell membrane. Involved in exocytosis by regulating a late step in synaptic vesicle fusion. Could play a role in neurotransmitter release by regulating membrane flow in the nerve terminal. Plays a role in the recruitment of endophilin unc-57 to synaptic vesicles. Probably by controlling dense-core vesicle trafficking, plays a role in the AVG neuron-mediated formation of the right axon tract of the ventral nerve cord. The sequence is that of Ras-related protein Rab-3 (rab-3) from Caenorhabditis elegans.